A 186-amino-acid chain; its full sequence is Tetratricopeptide repeat protein 36 (186 aa).

3 TPR repeats span residues 48–81 (SKAL…LPDR), 83–115 (SAYN…SGGR), and 120–153 (RQSF…GSPF).

The protein belongs to the TTC36 family.

This is Tetratricopeptide repeat protein 36 (Ttc36) from Mus musculus (Mouse).